Here is a 66-residue protein sequence, read N- to C-terminus: Large ribosomal subunit protein uL29 (66 aa).

It belongs to the universal ribosomal protein uL29 family.

The sequence is that of Large ribosomal subunit protein uL29 from Thermotoga sp. (strain RQ2).